Reading from the N-terminus, the 419-residue chain is Ubiquitin receptor RAD23c (419 aa).

The Ubiquitin-like domain maps to Met-1–Pro-79. Low complexity predominate over residues Ala-83–Val-118. Residues Ala-83–Asp-172 are disordered. A compositionally biased stretch (pro residues) spans Ala-119–Ala-135. Over residues Pro-136–Pro-146 the composition is skewed to low complexity. The UBA 1 domain maps to Ser-185–Gly-228. The tract at residues Val-235–Gly-282 is disordered. Residues Ala-245–Pro-270 are compositionally biased toward low complexity. The region spanning Gly-288–Ile-331 is the STI1 domain. One can recognise a UBA 2 domain in the interval Thr-372–His-413.

This sequence belongs to the RAD23 family. As to quaternary structure, interacts with 'Lys-48'-linked polyubiquitin chains via its both UBA domains. Interacts with RPN10 via its ubiquitin-like domain. Widely expressed in the whole plant.

Its subcellular location is the nucleus. It localises to the cytoplasm. Its function is as follows. May be involved in nucleotide excision repair. Binds and presumably selects ubiquitin-conjugates for destruction. Prefers multiubiquitin chains rather than single ubiquitins, with a binding affinity for 'Lys-48'-linked ubiquitin chains. Acts as a ubiquitin receptor that associates with the 26S proteasomal docking subunit RPN10 for the indirect recognition of ubiquitinated substrates of ubiquitin/26S proteasome-mediated proteolysis (UPP). Involved in UV tolerance in hypocotyls, specifically in dark conditions. This chain is Ubiquitin receptor RAD23c, found in Arabidopsis thaliana (Mouse-ear cress).